Consider the following 130-residue polypeptide: Small ribosomal subunit protein uS11 (130 aa).

The protein belongs to the universal ribosomal protein uS11 family. Part of the 30S ribosomal subunit. Interacts with proteins S7 and S18. Binds to IF-3.

Functionally, located on the platform of the 30S subunit, it bridges several disparate RNA helices of the 16S rRNA. Forms part of the Shine-Dalgarno cleft in the 70S ribosome. This is Small ribosomal subunit protein uS11 from Xylella fastidiosa (strain M12).